A 116-amino-acid chain; its full sequence is Large ribosomal subunit protein bL21c (116 aa).

It belongs to the bacterial ribosomal protein bL21 family. Part of the 50S ribosomal subunit.

It localises to the plastid. The protein localises to the chloroplast. This protein binds to 23S rRNA. The polypeptide is Large ribosomal subunit protein bL21c (Emiliania huxleyi (Coccolithophore)).